We begin with the raw amino-acid sequence, 234 residues long: 1-(5-phosphoribosyl)-5-[(5-phosphoribosylamino)methylideneamino] imidazole-4-carboxamide isomerase (234 aa).

Aspartate 9 acts as the Proton acceptor in catalysis. Aspartate 131 (proton donor) is an active-site residue.

It belongs to the HisA/HisF family.

Its subcellular location is the cytoplasm. It catalyses the reaction 1-(5-phospho-beta-D-ribosyl)-5-[(5-phospho-beta-D-ribosylamino)methylideneamino]imidazole-4-carboxamide = 5-[(5-phospho-1-deoxy-D-ribulos-1-ylimino)methylamino]-1-(5-phospho-beta-D-ribosyl)imidazole-4-carboxamide. The protein operates within amino-acid biosynthesis; L-histidine biosynthesis; L-histidine from 5-phospho-alpha-D-ribose 1-diphosphate: step 4/9. This is 1-(5-phosphoribosyl)-5-[(5-phosphoribosylamino)methylideneamino] imidazole-4-carboxamide isomerase from Staphylococcus epidermidis (strain ATCC 12228 / FDA PCI 1200).